The sequence spans 672 residues: ATP-dependent zinc metalloprotease FtsH 1 (672 aa).

The disordered stretch occupies residues 1–22 (MKKDSESNSSDKSNKEELSTGR). The Cytoplasmic portion of the chain corresponds to 1-23 (MKKDSESNSSDKSNKEELSTGRR). The helical transmembrane segment at 24-44 (GGNPMIIALVITVLAAMLFFN) threads the bilayer. Residues 45–141 (QPEPSSLISA…KFSPPDNTAA (97 aa)) lie on the Periplasmic side of the membrane. A helical membrane pass occupies residues 142–162 (ILNLLILVGLPLAIFFFIFMM). The Cytoplasmic portion of the chain corresponds to 163–672 (IRRTRNDMMG…TSNASARRED (510 aa)). Residue 237-244 (GPPGTGKT) participates in ATP binding. His-458 serves as a coordination point for Zn(2+). Glu-459 is an active-site residue. His-462 and Asp-534 together coordinate Zn(2+). The interval 642–672 (RLGDEEGKVEQIMAPEGAAERTSNASARRED) is disordered. The span at 662–672 (RTSNASARRED) shows a compositional bias: polar residues.

It in the central section; belongs to the AAA ATPase family. The protein in the C-terminal section; belongs to the peptidase M41 family. As to quaternary structure, homohexamer. Zn(2+) is required as a cofactor.

Its subcellular location is the cell inner membrane. Its function is as follows. Acts as a processive, ATP-dependent zinc metallopeptidase for both cytoplasmic and membrane proteins. Plays a role in the quality control of integral membrane proteins. This Rhodopirellula baltica (strain DSM 10527 / NCIMB 13988 / SH1) protein is ATP-dependent zinc metalloprotease FtsH 1.